Consider the following 1066-residue polypeptide: FHIP family protein GI14169 (1066 aa).

Positions 1–11 (MSWLRTSPLRQ) are enriched in polar residues. The disordered stretch occupies residues 1 to 35 (MSWLRTSPLRQSLTRSGSSSGNGSSGTATTMRQRP). Positions 12 to 30 (SLTRSGSSSGNGSSGTATT) are enriched in low complexity. S500 carries the phosphoserine modification. Positions 651–682 (GIDVTTTTTASASDTDLEHNNNSSSISSGRRD) are disordered. Low complexity predominate over residues 655–678 (TTTTTASASDTDLEHNNNSSSISS). S820 carries the post-translational modification Phosphoserine. 2 disordered regions span residues 821–913 (PLHQ…GNSA) and 935–1007 (SGGE…TGNF). The span at 822 to 855 (LHQQLQHQQQHQQLAQTNSHTQQQQQQQQQQAQQ) shows a compositional bias: low complexity. A compositionally biased stretch (polar residues) spans 856–874 (RSTYATLSAATPVQASPTS). A compositionally biased stretch (low complexity) spans 890–913 (SRSITSMFSRRSTSSTPASNGNSA). Over residues 947–971 (QDSTRGNTCETSLSTAPRQEPQTNV) the composition is skewed to polar residues. Over residues 972-997 (GSSSNSSIGSSTQTLSGTHSSSTLHG) the composition is skewed to low complexity.

Belongs to the FHIP family.

This is FHIP family protein GI14169 from Drosophila mojavensis (Fruit fly).